We begin with the raw amino-acid sequence, 306 residues long: Nucleotide-binding protein MUL_1815 (306 aa).

29–36 (GLSGAGRG) contacts ATP. 80–83 (DVRS) contacts GTP.

It belongs to the RapZ-like family.

Its function is as follows. Displays ATPase and GTPase activities. This is Nucleotide-binding protein MUL_1815 from Mycobacterium ulcerans (strain Agy99).